The primary structure comprises 753 residues: MNRNCASPEEGGTTEQLVKEASDIVERDGFENKKKPPTLKLEHVEVVGEKSPTPATVYDLFKKYKKPDIVTNSNGDDMNVGFDQLSSDEKNGFLRKLQMLTVSSRKSVKVVGESTPSSAGRLLKKFAPSRKPTEKISVDEPPSRFNFFGRSTKKLSDSDRPSSLPKKKSARRLLFGKEEQKPEPEVVKNRVLPAMTSQQSAKGAPIPINKPYRYQGPRGSLETPTDSPAKISSNSSSSSPIPPVPTRNHFTSMNEESPSKKRTFSRQGLSNRDNLSNGSWHGELPPRDYTSPTFSRKIFVGGVPWDITEAALKDSFGEFGSCAVEWPGQEARYRSGQSNIAPLTNLRNQSKYAGQAATGYVYMIFEDERAVASLLHECSQEIGGAGEWYFKIRAQRSKSTEIRQVQIIPWVTSDSMFCEDESLLETGIEPKRTVFVGALHGMMTAQVLHWIMEDCFGSVECVQLDTDKFKYPIGSGRVTFREHGAYFKAIEMGYLHVHTSKFRKRVQIDPFLESTSCMVCTTESAQCFCRNRNCFKYYCHTCWAIDHGKDNADDVHVPVIVPSSASKAYAGPHRRPHLTSNSLSKSHGCSTNNQLSHVLSPGFPMIVGGPSQTLSALYGYIQNNQQMMLTPAVYETPMTPPSNESNAKRRSFTEFQNPAIFFNPSSMMTPQKSATCSETPVPAFFTNSAAFLTPNSNYYGSPNHSSSNISQSPQQYYGANLYYGYMPPQVAYDGSTNGSKLSPIHVPHIPNYQ.

Residues 111-286 (VGESTPSSAG…NGSWHGELPP (176 aa)) form a disordered region. Basic and acidic residues-rich tracts occupy residues 131–142 (KPTEKISVDEPP) and 175–188 (FGKE…EVVK). Over residues 227–239 (SPAKISSNSSSSS) the composition is skewed to low complexity. The span at 265 to 279 (SRQGLSNRDNLSNGS) shows a compositional bias: polar residues. The region spanning 298 to 320 (IFVGGVPWDITEAALKDSFGEFG) is the RRM domain. Residues 567 to 589 (KAYAGPHRRPHLTSNSLSKSHGC) are disordered. Over residues 578 to 589 (LTSNSLSKSHGC) the composition is skewed to polar residues.

Functionally, cytoplasmic polyadenylation element binding protein that binds to and regulates the translation of specific mRNAs. The chain is Cytoplasmic polyadenylation element-binding protein 3 (cpb-3) from Caenorhabditis briggsae.